A 484-amino-acid chain; its full sequence is Glutamate--tRNA ligase (484 aa).

Positions 11–21 match the 'HIGH' region motif; sequence PSPTGYLHIGN. Positions 252 to 256 match the 'KMSKS' region motif; the sequence is KLSKR. Lysine 255 contacts ATP.

Belongs to the class-I aminoacyl-tRNA synthetase family. Glutamate--tRNA ligase type 1 subfamily. As to quaternary structure, monomer.

It is found in the cytoplasm. It carries out the reaction tRNA(Glu) + L-glutamate + ATP = L-glutamyl-tRNA(Glu) + AMP + diphosphate. Catalyzes the attachment of glutamate to tRNA(Glu) in a two-step reaction: glutamate is first activated by ATP to form Glu-AMP and then transferred to the acceptor end of tRNA(Glu). The chain is Glutamate--tRNA ligase from Staphylococcus epidermidis (strain ATCC 35984 / DSM 28319 / BCRC 17069 / CCUG 31568 / BM 3577 / RP62A).